Consider the following 130-residue polypeptide: DNA-directed RNA polymerase subunit omega (130 aa).

Disordered stretches follow at residues 79 to 98 and 108 to 130; these read EPES…VDAD and TEEE…EEDE.

This sequence belongs to the RNA polymerase subunit omega family. In terms of assembly, the RNAP catalytic core consists of 2 alpha, 1 beta, 1 beta' and 1 omega subunit. When a sigma factor is associated with the core the holoenzyme is formed, which can initiate transcription.

It catalyses the reaction RNA(n) + a ribonucleoside 5'-triphosphate = RNA(n+1) + diphosphate. In terms of biological role, promotes RNA polymerase assembly. Latches the N- and C-terminal regions of the beta' subunit thereby facilitating its interaction with the beta and alpha subunits. The protein is DNA-directed RNA polymerase subunit omega of Nitrobacter winogradskyi (strain ATCC 25391 / DSM 10237 / CIP 104748 / NCIMB 11846 / Nb-255).